Here is a 513-residue protein sequence, read N- to C-terminus: Cytochrome P450 1A2 (513 aa).

Ser68 carries an O-linked (GlcNAc) serine glycan. Cys456 contributes to the heme binding site.

This sequence belongs to the cytochrome P450 family. Interacts with PGRMC1; the interaction requires PGRMC1 homodimerization. Requires heme as cofactor.

It localises to the endoplasmic reticulum membrane. It is found in the microsome membrane. It catalyses the reaction an organic molecule + reduced [NADPH--hemoprotein reductase] + O2 = an alcohol + oxidized [NADPH--hemoprotein reductase] + H2O + H(+). The catalysed reaction is 17beta-estradiol + reduced [NADPH--hemoprotein reductase] + O2 = 2-hydroxy-17beta-estradiol + oxidized [NADPH--hemoprotein reductase] + H2O + H(+). The enzyme catalyses 17beta-estradiol + reduced [NADPH--hemoprotein reductase] + O2 = 4-hydroxy-17beta-estradiol + oxidized [NADPH--hemoprotein reductase] + H2O + H(+). It carries out the reaction estrone + reduced [NADPH--hemoprotein reductase] + O2 = 2-hydroxyestrone + oxidized [NADPH--hemoprotein reductase] + H2O + H(+). It catalyses the reaction estrone + reduced [NADPH--hemoprotein reductase] + O2 = 4-hydroxyestrone + oxidized [NADPH--hemoprotein reductase] + H2O + H(+). The catalysed reaction is cholesterol + reduced [NADPH--hemoprotein reductase] + O2 = 25-hydroxycholesterol + oxidized [NADPH--hemoprotein reductase] + H2O + H(+). The enzyme catalyses all-trans-retinol + reduced [NADPH--hemoprotein reductase] + O2 = all-trans-retinal + oxidized [NADPH--hemoprotein reductase] + 2 H2O + H(+). It carries out the reaction all-trans-retinal + reduced [NADPH--hemoprotein reductase] + O2 = all-trans-retinoate + oxidized [NADPH--hemoprotein reductase] + H2O + 2 H(+). It catalyses the reaction (5Z,8Z,11Z,14Z)-eicosatetraenoate + reduced [NADPH--hemoprotein reductase] + O2 = (14R,15S)-epoxy-(5Z,8Z,11Z)-eicosatrienoate + oxidized [NADPH--hemoprotein reductase] + H2O + H(+). The catalysed reaction is (5Z,8Z,11Z,14Z)-eicosatetraenoate + reduced [NADPH--hemoprotein reductase] + O2 = (14S,15R)-epoxy-(5Z,8Z,11Z)-eicosatrienoate + oxidized [NADPH--hemoprotein reductase] + H2O + H(+). The enzyme catalyses (5Z,8Z,11Z,14Z,17Z)-eicosapentaenoate + reduced [NADPH--hemoprotein reductase] + O2 = (17R,18S)-epoxy-(5Z,8Z,11Z,14Z)-eicosatetraenoate + oxidized [NADPH--hemoprotein reductase] + H2O + H(+). It carries out the reaction (4Z,7Z,10Z,13Z,16Z,19Z)-docosahexaenoate + reduced [NADPH--hemoprotein reductase] + O2 = (19R,20S)-epoxy-(4Z,7Z,10Z,13Z,16Z)-docosapentaenoate + oxidized [NADPH--hemoprotein reductase] + H2O + H(+). It catalyses the reaction (5S)-hydroperoxy-(6E,8Z,11Z,14Z)-eicosatetraenoate = 5-oxo-(6E,8Z,11Z,14Z)-eicosatetraenoate + H2O. The catalysed reaction is (12S)-hydroperoxy-(5Z,8Z,10E,14Z)-eicosatetraenoate = 12-oxo-(5Z,8Z,10E,14Z)-eicosatetraenoate + H2O. The enzyme catalyses (15S)-hydroperoxy-(5Z,8Z,11Z,13E)-eicosatetraenoate = 15-oxo-(5Z,8Z,11Z,13E)-eicosatetraenoate + H2O. It carries out the reaction (13S)-hydroperoxy-(9Z,11E)-octadecadienoate = 13-oxo-(9Z,11E)-octadecadienoate + H2O. It catalyses the reaction (5Z,8Z,11Z,14Z)-eicosatetraenoate + reduced [NADPH--hemoprotein reductase] + O2 = 13-hydroxy-(5Z,8Z,11Z,14Z)-eicosatetraenoate + oxidized [NADPH--hemoprotein reductase] + H2O + H(+). The catalysed reaction is (5Z,8Z,11Z,14Z)-eicosatetraenoate + reduced [NADPH--hemoprotein reductase] + O2 = 19-hydroxy-(5Z,8Z,11Z,14Z)-eicosatetraenoate + oxidized [NADPH--hemoprotein reductase] + H2O + H(+). The enzyme catalyses (9Z,12Z)-octadecadienoate + reduced [NADPH--hemoprotein reductase] + O2 = 11-hydroxy-(9Z,12Z)-octadecadienoate + oxidized [NADPH--hemoprotein reductase] + H2O + H(+). The protein operates within cofactor metabolism; retinol metabolism. It participates in steroid metabolism; cholesterol metabolism. Its pathway is lipid metabolism; arachidonate metabolism. Its function is as follows. A cytochrome P450 monooxygenase involved in the metabolism of various endogenous substrates, including fatty acids, steroid hormones and vitamins. Mechanistically, uses molecular oxygen inserting one oxygen atom into a substrate, and reducing the second into a water molecule, with two electrons provided by NADPH via cytochrome P450 reductase (NADPH--hemoprotein reductase). Catalyzes the hydroxylation of carbon-hydrogen bonds. Exhibits high catalytic activity for the formation of hydroxyestrogens from estrone (E1) and 17beta-estradiol (E2), namely 2-hydroxy E1 and E2. Metabolizes cholesterol toward 25-hydroxycholesterol, a physiological regulator of cellular cholesterol homeostasis. May act as a major enzyme for all-trans retinoic acid biosynthesis in the liver. Catalyzes two successive oxidative transformation of all-trans retinol to all-trans retinal and then to the active form all-trans retinoic acid. Primarily catalyzes stereoselective epoxidation of the last double bond of polyunsaturated fatty acids (PUFA), displaying a strong preference for the (R,S) stereoisomer. Catalyzes bisallylic hydroxylation and omega-1 hydroxylation of PUFA. May also participate in eicosanoids metabolism by converting hydroperoxide species into oxo metabolites (lipoxygenase-like reaction, NADPH-independent). Plays a role in the oxidative metabolism of xenobiotics. Catalyzes the N-hydroxylation of heterocyclic amines and the O-deethylation of phenacetin. Metabolizes caffeine via N3-demethylation. The protein is Cytochrome P450 1A2 (Cyp1a2) of Rattus norvegicus (Rat).